We begin with the raw amino-acid sequence, 484 residues long: Calcium-dependent protein kinase 26 (484 aa).

In terms of domain architecture, Protein kinase spans 24–282 (YSLGHKLGQG…AHQVLRHPWI (259 aa)). ATP-binding positions include 30-38 (LGQGQFGTT) and Lys53. The active-site Proton acceptor is Asp148. Ser188 bears the Phosphoserine mark. Residues 288-318 (APDRALDPAVLSRLKQFSAMNKLKQMALRVI) form an autoinhibitory domain region. EF-hand domains lie at 325 to 360 (EEIAGLKEMFKAMDTDNSGAITFDELKAGLRRYGST), 361 to 396 (LKDTEIRDLMEAADIDKSGTIDYGEFIAATIHLNKL), 397 to 432 (EREEHLLSAFRYFDKDGSGYITIDELQHACAEQGMS), and 436 to 466 (LEDVIKEVDQDNDGRIDYGEFVAMMQKGIVG). Residues Asp338, Asp340, Ser342, Glu349, Asp374, Asp376, Ser378, Thr380, Glu385, Asp410, Asp412, Ser414, Tyr416, Glu421, Asp444, Asp446, Asp448, Arg450, and Glu455 each coordinate Ca(2+).

This sequence belongs to the protein kinase superfamily. Ser/Thr protein kinase family. CDPK subfamily.

It catalyses the reaction L-seryl-[protein] + ATP = O-phospho-L-seryl-[protein] + ADP + H(+). The catalysed reaction is L-threonyl-[protein] + ATP = O-phospho-L-threonyl-[protein] + ADP + H(+). With respect to regulation, activated by calcium. Autophosphorylation may play an important role in the regulation of the kinase activity. May play a role in signal transduction pathways that involve calcium as a second messenger. This Arabidopsis thaliana (Mouse-ear cress) protein is Calcium-dependent protein kinase 26 (CPK26).